The sequence spans 358 residues: Trace amine-associated receptor 7f (358 aa).

Residues 1 to 47 (MSIADETVSWNQDSILSRDLFSATSAELCYENLNRSCVRSPYSPGPR) lie on the Extracellular side of the membrane. N-linked (GlcNAc...) asparagine glycosylation is present at N34. Cystine bridges form between C37–C201 and C120–C205. A helical membrane pass occupies residues 48-68 (LILYAVFGFGAVLAVCGNLLV). Topologically, residues 69–83 (MTSILHFRQLHSPAN) are cytoplasmic. Residues 84 to 104 (FLVASLACADFLVGVMVMPFS) traverse the membrane as a helical segment. The Extracellular portion of the chain corresponds to 105 to 121 (MVRSVEGCWYFGDSYCK). Residues 122–143 (LHTCFDVSFCYCSLFHLCFISV) traverse the membrane as a helical segment. Residues 144 to 166 (DRYIAVSDPLAYPTRFTASVSGK) are Cytoplasmic-facing. The helical transmembrane segment at 167-187 (CITFSWLLSISYGFSLIYTGA) threads the bilayer. The Extracellular segment spans residues 188-212 (SEAGLEDLVSSLTCVGGCQIAVNQT). N-linked (GlcNAc...) asparagine glycosylation occurs at N210. Residues 213 to 233 (WVFINFSVFLIPTLVMITVYS) traverse the membrane as a helical segment. Topologically, residues 234–274 (KIFLIAKQQAQNIEKMSKQTARASDSYKDRVAKRERKAAKT) are cytoplasmic. Residues 275–295 (LGIAVAAFLLSWLPYFIDSFI) traverse the membrane as a helical segment. The Extracellular segment spans residues 296 to 309 (DAFLGFITPTYVYE). The chain crosses the membrane as a helical span at residues 310–333 (ILVWIVYYNSAMNPLIYAFFYPWF). The Cytoplasmic segment spans residues 334-358 (RKAIKLTVTGKILRENSSTTNLFSE).

This sequence belongs to the G-protein coupled receptor 1 family. In terms of tissue distribution, specifically expressed in neurons of the olfactory epithelium.

It localises to the cell membrane. Olfactory receptor activated by trace amines, such as N-methylpiperidine and N,N-dimethylcyclohexylamine. Trace amine compounds are enriched in animal body fluids and act on trace amine-associated receptors (TAARs) to elicit both intraspecific and interspecific innate behaviors. Ligand-binding causes a conformation change that triggers signaling via G(s)-class of G alpha proteins (GNAL or GNAS). The polypeptide is Trace amine-associated receptor 7f (Mus musculus (Mouse)).